We begin with the raw amino-acid sequence, 407 residues long: D-inositol 3-phosphate glycosyltransferase (407 aa).

Residue H2 participates in 1D-myo-inositol 3-phosphate binding. UDP-N-acetyl-alpha-D-glucosamine-binding positions include 8–9 and G16; that span reads QP. Residues 13-18, R71, Y104, T128, and R148 contribute to the 1D-myo-inositol 3-phosphate site; that span reads DAGGLN. Residues R222 and K227 each coordinate UDP-N-acetyl-alpha-D-glucosamine. Positions 297, 298, and 300 each coordinate Mg(2+). The UDP-N-acetyl-alpha-D-glucosamine site is built by E310 and E318. A Mg(2+)-binding site is contributed by T324.

Belongs to the glycosyltransferase group 1 family. MshA subfamily. In terms of assembly, homodimer.

The catalysed reaction is 1D-myo-inositol 3-phosphate + UDP-N-acetyl-alpha-D-glucosamine = 1D-myo-inositol 2-acetamido-2-deoxy-alpha-D-glucopyranoside 3-phosphate + UDP + H(+). Catalyzes the transfer of a N-acetyl-glucosamine moiety to 1D-myo-inositol 3-phosphate to produce 1D-myo-inositol 2-acetamido-2-deoxy-glucopyranoside 3-phosphate in the mycothiol biosynthesis pathway. This Frankia alni (strain DSM 45986 / CECT 9034 / ACN14a) protein is D-inositol 3-phosphate glycosyltransferase.